A 267-amino-acid polypeptide reads, in one-letter code: Electron transfer flavoprotein subunit beta (267 aa).

Belongs to the ETF beta-subunit/FixA family. In terms of assembly, heterodimer of an alpha and a beta subunit.

In terms of biological role, participates in the electron transfer process during N,N-dimethylglycine (DMG) degradation to sarcosine. In Chromohalobacter salexigens (strain ATCC BAA-138 / DSM 3043 / CIP 106854 / NCIMB 13768 / 1H11), this protein is Electron transfer flavoprotein subunit beta.